The chain runs to 197 residues: Dephospho-CoA kinase (197 aa).

Positions 3 to 197 (ILGLTGSIAM…TGCLVGQGSR (195 aa)) constitute a DPCK domain. 11–16 (AMGKST) contributes to the ATP binding site.

This sequence belongs to the CoaE family.

Its subcellular location is the cytoplasm. It catalyses the reaction 3'-dephospho-CoA + ATP = ADP + CoA + H(+). The protein operates within cofactor biosynthesis; coenzyme A biosynthesis; CoA from (R)-pantothenate: step 5/5. Catalyzes the phosphorylation of the 3'-hydroxyl group of dephosphocoenzyme A to form coenzyme A. In Zymomonas mobilis subsp. mobilis (strain ATCC 31821 / ZM4 / CP4), this protein is Dephospho-CoA kinase.